Consider the following 515-residue polypeptide: Putative pumilio homolog 8, chloroplastic (515 aa).

Positions 1 to 33 (MMRGEFGEASSLSRSPSSPLQTEPHPQSPKFYR) are disordered. The transit peptide at 1–70 (MMRGEFGEAS…LSSYFSNGLC (70 aa)) directs the protein to the chloroplast. The span at 10-20 (SSLSRSPSSPL) shows a compositional bias: low complexity. In terms of domain architecture, PUM-HD spans 174–515 (SGVGALFDHQ…RIFSRNLLKN (342 aa)). Pumilio repeat units lie at residues 198 to 233 (EFQG…VIFS), 234 to 269 (EVIP…QIIL), 270 to 308 (MVTS…SLVK), 310 to 345 (ALRP…FIFE), 346 to 381 (DATK…KLVT), 382 to 417 (EISR…AMLA), 418 to 456 (QLKG…ELIS), and 457 to 490 (VPHF…TLVE).

Its subcellular location is the plastid. It is found in the chloroplast. The protein resides in the cytoplasm. Functionally, sequence-specific RNA-binding protein that regulates translation and mRNA stability by binding the 3'-UTR of target mRNAs. In Arabidopsis thaliana (Mouse-ear cress), this protein is Putative pumilio homolog 8, chloroplastic (APUM8).